A 151-amino-acid polypeptide reads, in one-letter code: Deoxyuridine 5'-triphosphate nucleotidohydrolase (151 aa).

Residues Arg-70–Gly-72, Asn-83, Leu-87–Asp-89, and Met-97 each bind substrate.

It belongs to the dUTPase family. The cofactor is Mg(2+).

The catalysed reaction is dUTP + H2O = dUMP + diphosphate + H(+). Its pathway is pyrimidine metabolism; dUMP biosynthesis; dUMP from dCTP (dUTP route): step 2/2. This enzyme is involved in nucleotide metabolism: it produces dUMP, the immediate precursor of thymidine nucleotides and it decreases the intracellular concentration of dUTP so that uracil cannot be incorporated into DNA. The protein is Deoxyuridine 5'-triphosphate nucleotidohydrolase of Actinobacillus pleuropneumoniae serotype 7 (strain AP76).